A 588-amino-acid chain; its full sequence is 2-isopropylmalate synthase (588 aa).

Positions 40–314 (PRWCAVDLRD…DPQIDFSDLD (275 aa)) constitute a Pyruvate carboxyltransferase domain. Mg(2+)-binding residues include Asp-49, His-253, His-255, and Asn-289. Positions 456 to 588 (APLDRVEEKW…TVREPELAAV (133 aa)) are regulatory domain.

This sequence belongs to the alpha-IPM synthase/homocitrate synthase family. LeuA type 2 subfamily. Homodimer. Mg(2+) is required as a cofactor.

The protein localises to the cytoplasm. It carries out the reaction 3-methyl-2-oxobutanoate + acetyl-CoA + H2O = (2S)-2-isopropylmalate + CoA + H(+). It participates in amino-acid biosynthesis; L-leucine biosynthesis; L-leucine from 3-methyl-2-oxobutanoate: step 1/4. Catalyzes the condensation of the acetyl group of acetyl-CoA with 3-methyl-2-oxobutanoate (2-ketoisovalerate) to form 3-carboxy-3-hydroxy-4-methylpentanoate (2-isopropylmalate). The protein is 2-isopropylmalate synthase of Clavibacter michiganensis subsp. michiganensis (strain NCPPB 382).